The sequence spans 297 residues: MKRPDYRTLQALDAVIRERGFERAAQKLCITQSAVSQRIKQLENLFGQPLLVRTIPPRPTEQGQKLLALLHQVELLEEEWLGNETNSDIPLLLSLAVNADSLATWLLPALQSVLVDSPIRLNLQVEDETRTQERLRRGEVVGAVSIQSQPLPSCLVDKLGALDYLFVASPTFAARYFPNGVTRSALLRAPAVAFDHLDDMHQAFLQQNFDLSPGSVPCHIVNSSEAFVQLARQGTTCCMIPHLQIERELANNELVDLTPGLFQRRMLYWHRFAPESRMMRKVTDALLSHGHQVLRQS.

The region spanning 4–60 (PDYRTLQALDAVIRERGFERAAQKLCITQSAVSQRIKQLENLFGQPLLVRTIPPRPT) is the HTH lysR-type domain. Residues 21–40 (FERAAQKLCITQSAVSQRIK) constitute a DNA-binding region (H-T-H motif).

The protein belongs to the LysR transcriptional regulatory family. Homodimer.

In terms of biological role, controls the transcription of genes involved in arginine and lysine metabolism. This is HTH-type transcriptional regulator ArgP from Pectobacterium atrosepticum (strain SCRI 1043 / ATCC BAA-672) (Erwinia carotovora subsp. atroseptica).